We begin with the raw amino-acid sequence, 61 residues long: Conotoxin Cal14.6 (61 aa).

A signal peptide spans 1–21 (MKFLLFLSVALLLTSFIETEA). The propeptide occupies 22–38 (GPVNEAGVERLFRALVG). Pro57 bears the 4-hydroxyproline; partial mark. Pro60 carries the proline amide modification.

In terms of processing, contains 2 disulfide bonds. In terms of tissue distribution, expressed by the venom duct.

It is found in the secreted. Its function is as follows. Probable neurotoxin with unknown target. Possibly targets ion channels. This chain is Conotoxin Cal14.6, found in Californiconus californicus (California cone).